Consider the following 239-residue polypeptide: Norbelladine 4'-O-methyltransferase 2 (239 aa).

Residues Val-55, Glu-77, 79 to 80 (GV), Ser-85, Asp-103, and Ala-132 contribute to the S-adenosyl-L-methionine site. An a divalent metal cation-binding site is contributed by Asp-155. Asp-157 is an S-adenosyl-L-methionine binding site. 2 residues coordinate a divalent metal cation: Asp-181 and Asn-182.

The protein belongs to the class I-like SAM-binding methyltransferase superfamily. Cation-dependent O-methyltransferase family. It depends on Mg(2+) as a cofactor.

The enzyme catalyses norbelladine + S-adenosyl-L-methionine = 4'-O-methylnorbelladine + S-adenosyl-L-homocysteine + H(+). The protein operates within alkaloid biosynthesis. Functionally, 4'-O-methyltransferase converting norbelladine to 4'-O-methylnorbelladine. 4'-O-methylnorbelladine is a precursor to all Amaryllidaceae alkaloids such as galanthamine, lycorine and haemanthamine, and including haemanthamine- and crinamine-type alkaloids, promising anticancer agents. In Narcissus aff. pseudonarcissus MK-2014 (Daffodil), this protein is Norbelladine 4'-O-methyltransferase 2.